The sequence spans 1169 residues: MKSMIANYISEDNRFQELDEVFGQENILVTGLSPSAKATIIAEKYLKDHKQMLLVTNNLYQADKIETDILQYVDDSEVYKYPVQDIMTEEFSTQSPQLMSERVRTLTALAQGEKGLFIVPLNGFKKWLTPVDLWKDHQMTLKVGQDIDVDAFLNKLVNMGYRRESVVSHIGEFSLRGGIIDIYPLIGTPVRIELFDTEVDSIRDFDVETQRSNDNINQVEITTASDYIITDEVIQHLQNELKKAYEYTRPKIEKSVRNDLKETYESFKLFESTFFDHQLLRRLVSFMYEKPSTLIDYFQKNAIIVVDEFNRIKETEETLTTEVEDFMSNLIESGNGFIGQGFMKYESFDALLEQHAVAYFTLFTSSMQVPLQHIIKFSCKPVQQFYGQYDIMRSEFQRYVHQDYTVVVLVETETKVERIQSMLNEMHIPTVSNIHEDIDGGQVVVTEGSLSEGFELPYMQLVVITERELFKTRQKKQRKRTKTISNAEKIKSYQDLNVGDYIVHVHHGVGRYLGVETLEVGDTHRDYIKLQYKGTDQLFVPVDQMDQVQKYVASEDKSPRLNKLGGTEWKKTKAKVQQSVEDIADELIDLYKEREMSVGYQYGQDTAEQSAFEHDFPYELTPDQSKSIDEIKGDMERARPMDRLLCGDVGYGKTEVAVRAAFKAVMDGKQVAFLVPTTILAQQHYETLLERMQDFPVEIQLVSRFRTAKEIRETKEGLKSGYVDIVVGTHKLLGKDIQYKDLGLLIVDEEQRFGVRHKERIKTLKKNVDVLTLTATPIPRTLHMSMLGVRDLSVIETPPENRFPVQTYVLEQNTNFIKEALERELSRDGQVFYLYNKVQSIYEKREQLQRLMPDANIAVAHGQMTERDLEETMLSFINHEYDILVTTTIIETGVDVPNANTLIIEEADRFGLSQLYQLRGRVGRSSRIGYAYFLHPANKVLNETAEERLQTIKEFTELGSGFKIAMRDLNIRGAGNLLGKQQHGFIDSVGFDLYSQMLEEAVNEKRGIKEESPDAPDIEVELHLDAYLPAEYIQSEQAKIEIYKKLRKVETEEQLFDVKDELIDRFNDYPIEVERLLDIVEIKVHALHAGVELIKDKGKSIQIILSPKATEDINGEELFKQTQPLGRAMKVGVQNNAMNVTLTKSKQWLDSLKFLVRCIEESMAIKDED.

Residues 634–795 (DMERARPMDR…MLGVRDLSVI (162 aa)) enclose the Helicase ATP-binding domain. An ATP-binding site is contributed by 647–654 (GDVGYGKT). The DEEQ box signature appears at 748–751 (DEEQ). Residues 809–970 (VLEQNTNFIK…GFKIAMRDLN (162 aa)) enclose the Helicase C-terminal domain.

This sequence in the N-terminal section; belongs to the UvrB family. In the C-terminal section; belongs to the helicase family. RecG subfamily.

It localises to the cytoplasm. Couples transcription and DNA repair by recognizing RNA polymerase (RNAP) stalled at DNA lesions. Mediates ATP-dependent release of RNAP and its truncated transcript from the DNA, and recruitment of nucleotide excision repair machinery to the damaged site. The polypeptide is Transcription-repair-coupling factor (Staphylococcus epidermidis (strain ATCC 12228 / FDA PCI 1200)).